The primary structure comprises 642 residues: MAVAVCGAVVPVVARLEGREFEYLMKKRSVTIGRNSSQGCVDVSMGHSSFISRRHLEIFIGGSGDGDDADVGDFYLRCLGKNGVFVDGVFQRRGAPPLQLPRVCTFRFPSTNIKITFTALAIDKKQKLEAPESPVKPVQPQISPLTIHIPDNIAHLISPLPSPTGTISAANSCPSSPRGAGSSGFKFGRVIPPDLIAEAAQSENDKDASGGDSPKDDSKPPYSYAQLIVQAITMAPDKQLTLNGIYTHITKNYPYYRTADKGWQNSIRHNLSLNRYFIKVPRSQEEPGKGSFWRIDPASESKLVEQAFRKRRPRGVPCFRTPLGPLSSRSAPASPNHSGVFSAHSSGVQTPESLSREGSPIPLEPDASVIHPKLAVIQEARFAQSAPGSPLSSQPVLITVQRQLPQTIKPVTYTVAAPVTTATSQQAVMQTVHVVHQIPAVSVTNVTGLTPINTYTVGGQTMVAQAAVMAQPKLEHQENGDHKEVKVKVEAIPAIGHPALTTASRIIQTSSSAPLQTVTIVQTPLGQHQLPIKAVTQNGTHVVPITTAIQGQVTTANSSYSLIESPWQWRGNGTRAASPLHMLATHASASASLPTKRQNGDQSEQPDIKRGKTDEREVLAMTGLDAQSEMAMAASNEQENQK.

One can recognise an FHA domain in the interval 30-91 (VTIGRNSSQG…NGVFVDGVFQ (62 aa)). The segment at 201 to 221 (QSENDKDASGGDSPKDDSKPP) is disordered. Residues 203–219 (ENDKDASGGDSPKDDSK) are compositionally biased toward basic and acidic residues. Residues 219 to 314 (KPPYSYAQLI…EQAFRKRRPR (96 aa)) constitute a DNA-binding region (fork-head). Positions 261–279 (KGWQNSIRHNLSLNRYFIK) are DNA-binding; major groove. 4 residues coordinate Mg(2+): Leu271, Ser272, Asn274, and Phe277. 2 DNA-binding; minor groove regions span residues 289 to 293 (KGSFW) and 309 to 314 (RKRRPR). 2 disordered regions span residues 323–359 (LGPL…REGS) and 589–615 (ASAS…KTDE). Composition is skewed to polar residues over residues 327–353 (SSRS…TPES) and 589–605 (ASAS…QSEQ). Over residues 606-615 (PDIKRGKTDE) the composition is skewed to basic and acidic residues.

In terms of tissue distribution, in neurula embryos, expressed strongly in the future floor plate and weakly in the neural crest progenitor cells. As development progresses, expression becomes stronger in neural crest cells. At stage 24, expressed in the eye, brain, branchial arches and in the presomitic mesoderm in the posterior embryo. At stage 29, additionally expressed in the pronephric tubules. At stage 35, expressed in the migrating lateral muscle precursors of the abdomen. Additionally, the developing proctodeum and head structures including the branchial arches, eyes and otic vesicles continue to show expression. Expression also persists in the nephros.

It localises to the nucleus. It is found in the cytoplasm. Its function is as follows. Transcriptional regulator involved in different processes such as glucose metabolism, aerobic glycolysis and autophagy. Recognizes and binds the forkhead DNA sequence motif (5'-GTAAACA-3') and can both act as a transcription activator or repressor, depending on the context. Acts as a key regulator of metabolic reprogramming towards aerobic glycolysis, a process in which glucose is converted to lactate in the presence of oxygen. Acts as a negative regulator of autophagy in skeletal muscle: in response to starvation, enters the nucleus, binds the promoters of autophagy genes and represses their expression, preventing proteolysis of skeletal muscle proteins. In Xenopus laevis (African clawed frog), this protein is Forkhead box protein K2.